We begin with the raw amino-acid sequence, 120 residues long: Large ribosomal subunit protein uL18 (120 aa).

The protein belongs to the universal ribosomal protein uL18 family. Part of the 50S ribosomal subunit; part of the 5S rRNA/L5/L18/L25 subcomplex. Contacts the 5S and 23S rRNAs.

Its function is as follows. This is one of the proteins that bind and probably mediate the attachment of the 5S RNA into the large ribosomal subunit, where it forms part of the central protuberance. This chain is Large ribosomal subunit protein uL18, found in Staphylococcus carnosus (strain TM300).